A 240-amino-acid polypeptide reads, in one-letter code: Purine nucleoside phosphorylase RC0672 (240 aa).

Residues H60, C96, and H113 each contribute to the Zn(2+) site.

Belongs to the purine nucleoside phosphorylase YfiH/LACC1 family. In terms of assembly, homodimer. Cu(2+) serves as cofactor. The cofactor is Zn(2+).

The catalysed reaction is adenosine + phosphate = alpha-D-ribose 1-phosphate + adenine. It catalyses the reaction S-methyl-5'-thioadenosine + phosphate = 5-(methylsulfanyl)-alpha-D-ribose 1-phosphate + adenine. It carries out the reaction inosine + phosphate = alpha-D-ribose 1-phosphate + hypoxanthine. The enzyme catalyses adenosine + H2O + H(+) = inosine + NH4(+). Purine nucleoside enzyme that catalyzes the phosphorolysis of adenosine and inosine nucleosides, yielding D-ribose 1-phosphate and the respective free bases, adenine and hypoxanthine. Also catalyzes the phosphorolysis of S-methyl-5'-thioadenosine into adenine and S-methyl-5-thio-alpha-D-ribose 1-phosphate. Also has adenosine deaminase activity. In Rickettsia conorii (strain ATCC VR-613 / Malish 7), this protein is Purine nucleoside phosphorylase RC0672.